Here is a 102-residue protein sequence, read N- to C-terminus: Large ribosomal subunit protein bL21 (102 aa).

It belongs to the bacterial ribosomal protein bL21 family. Part of the 50S ribosomal subunit. Contacts protein L20.

This protein binds to 23S rRNA in the presence of protein L20. This chain is Large ribosomal subunit protein bL21, found in Bacillus subtilis (strain 168).